Consider the following 187-residue polypeptide: Small ribosomal subunit protein uS5 (187 aa).

The disordered stretch occupies residues 1 to 20; the sequence is MAERENRRDRRDDRSREETP. The S5 DRBM domain maps to 22–85; sequence FADRLVAINR…EQAKRQMIRV (64 aa).

Belongs to the universal ribosomal protein uS5 family. As to quaternary structure, part of the 30S ribosomal subunit. Contacts proteins S4 and S8.

In terms of biological role, with S4 and S12 plays an important role in translational accuracy. Its function is as follows. Located at the back of the 30S subunit body where it stabilizes the conformation of the head with respect to the body. This Cereibacter sphaeroides (strain ATCC 17029 / ATH 2.4.9) (Rhodobacter sphaeroides) protein is Small ribosomal subunit protein uS5.